The sequence spans 744 residues: 1,4-alpha-glucan branching enzyme GlgB (744 aa).

Residues 1–23 are disordered; sequence MSGPEDPADRRHGEVPAPRRDIP. Residues 7–23 show a composition bias toward basic and acidic residues; it reads PADRRHGEVPAPRRDIP. Residue Asp424 is the Nucleophile of the active site. Glu476 acts as the Proton donor in catalysis.

It belongs to the glycosyl hydrolase 13 family. GlgB subfamily. As to quaternary structure, monomer.

The enzyme catalyses Transfers a segment of a (1-&gt;4)-alpha-D-glucan chain to a primary hydroxy group in a similar glucan chain.. It participates in glycan biosynthesis; glycogen biosynthesis. Functionally, catalyzes the formation of the alpha-1,6-glucosidic linkages in glycogen by scission of a 1,4-alpha-linked oligosaccharide from growing alpha-1,4-glucan chains and the subsequent attachment of the oligosaccharide to the alpha-1,6 position. The protein is 1,4-alpha-glucan branching enzyme GlgB of Nocardia farcinica (strain IFM 10152).